Consider the following 130-residue polypeptide: Methylglyoxal synthase (130 aa).

In terms of domain architecture, MGS-like spans 1–130; sequence MMTRPRIALI…AELSRVEAQP (130 aa). Residues H12, K16, 38–41, and 58–59 each bind substrate; these read TGTT and SG. Catalysis depends on D64, which acts as the Proton donor/acceptor. A substrate-binding site is contributed by H91.

The protein belongs to the methylglyoxal synthase family.

The enzyme catalyses dihydroxyacetone phosphate = methylglyoxal + phosphate. Its function is as follows. Catalyzes the formation of methylglyoxal from dihydroxyacetone phosphate. This is Methylglyoxal synthase from Cupriavidus pinatubonensis (strain JMP 134 / LMG 1197) (Cupriavidus necator (strain JMP 134)).